The sequence spans 384 residues: Succinyl-diaminopimelate desuccinylase (384 aa).

Residue histidine 71 participates in Zn(2+) binding. Aspartate 73 is an active-site residue. A Zn(2+)-binding site is contributed by aspartate 104. The active-site Proton acceptor is the glutamate 139. Zn(2+)-binding residues include glutamate 140, glutamate 168, and histidine 357.

It belongs to the peptidase M20A family. DapE subfamily. Homodimer. Zn(2+) is required as a cofactor. The cofactor is Co(2+).

The catalysed reaction is N-succinyl-(2S,6S)-2,6-diaminopimelate + H2O = (2S,6S)-2,6-diaminopimelate + succinate. The protein operates within amino-acid biosynthesis; L-lysine biosynthesis via DAP pathway; LL-2,6-diaminopimelate from (S)-tetrahydrodipicolinate (succinylase route): step 3/3. Catalyzes the hydrolysis of N-succinyl-L,L-diaminopimelic acid (SDAP), forming succinate and LL-2,6-diaminopimelate (DAP), an intermediate involved in the bacterial biosynthesis of lysine and meso-diaminopimelic acid, an essential component of bacterial cell walls. In Bradyrhizobium sp. (strain BTAi1 / ATCC BAA-1182), this protein is Succinyl-diaminopimelate desuccinylase.